We begin with the raw amino-acid sequence, 1803 residues long: Pyruvate dehydrogenase [NADP(+)], mitochondrial (1803 aa).

Residues 1–37 (MKQSVRPIISNVLRKEVALYSTIIGQDKGKEPTGRTY) constitute a mitochondrion transit peptide. 4Fe-4S ferredoxin-type domains are found at residues 747–776 (FIPQ…PFVL) and 802–831 (FRIQ…MTDA). Residues Cys756, Cys759, Cys762, Cys766, Cys811, Cys814, Cys817, and Cys821 each contribute to the [4Fe-4S] cluster site. The Flavodoxin-like domain maps to 1248-1391 (VTILYGSETG…GFNNWIPSVW (144 aa)). In terms of domain architecture, FAD-binding FR-type spans 1425-1650 (KSTPVLSITG…IHPTAMEFPD (226 aa)). Residues 1458 to 1469 (YQVGDSLGVFPE) and 1585 to 1595 (IKPRYYSISSA) each bind FAD.

In the N-terminal section; belongs to the pyruvate:ferredoxin/flavodoxin oxidoreductase family. Homodimer. FAD is required as a cofactor. Requires FMN as cofactor. Thiamine diphosphate serves as cofactor. The cofactor is iron-sulfur cluster.

Its subcellular location is the mitochondrion. It carries out the reaction pyruvate + NADP(+) + CoA = acetyl-CoA + CO2 + NADPH. Pyruvate dehydrogenase [NADP(+)] is one of three enzymes participating in respiratory metabolism. The enzyme is also active with 2-oxobutyrate and oxaloacetate. The enzyme is oxygen sensitive. This Euglena gracilis protein is Pyruvate dehydrogenase [NADP(+)], mitochondrial (PNO).